The sequence spans 188 residues: Probable DNA-directed RNA polymerase subunit delta (188 aa).

One can recognise an HTH HARE-type domain in the interval 14–83 (LSMIEVARAI…GDNKWGLRSW (70 aa)). Positions 117 to 188 (GDEDAIDYSD…EDDEDDEEEE (72 aa)) are disordered.

This sequence belongs to the RpoE family. As to quaternary structure, RNAP is composed of a core of 2 alpha, a beta and a beta' subunits. The core is associated with a delta subunit and one of several sigma factors.

Participates in both the initiation and recycling phases of transcription. In the presence of the delta subunit, RNAP displays an increased specificity of transcription, a decreased affinity for nucleic acids, and an increased efficiency of RNA synthesis because of enhanced recycling. This chain is Probable DNA-directed RNA polymerase subunit delta, found in Streptococcus uberis (strain ATCC BAA-854 / 0140J).